Consider the following 378-residue polypeptide: Anhydro-N-acetylmuramic acid kinase 2 (378 aa).

Gly14–Asp22 lines the ATP pocket.

The protein belongs to the anhydro-N-acetylmuramic acid kinase family.

It catalyses the reaction 1,6-anhydro-N-acetyl-beta-muramate + ATP + H2O = N-acetyl-D-muramate 6-phosphate + ADP + H(+). It functions in the pathway amino-sugar metabolism; 1,6-anhydro-N-acetylmuramate degradation. Its pathway is cell wall biogenesis; peptidoglycan recycling. In terms of biological role, catalyzes the specific phosphorylation of 1,6-anhydro-N-acetylmuramic acid (anhMurNAc) with the simultaneous cleavage of the 1,6-anhydro ring, generating MurNAc-6-P. Is required for the utilization of anhMurNAc either imported from the medium or derived from its own cell wall murein, and thus plays a role in cell wall recycling. The chain is Anhydro-N-acetylmuramic acid kinase 2 from Jannaschia sp. (strain CCS1).